Reading from the N-terminus, the 511-residue chain is Histidine ammonia-lyase 2 (511 aa).

A cross-link (5-imidazolinone (Ser-Gly)) is located at residues 144–146 (SSG). Residue Ser145 is modified to 2,3-didehydroalanine (Ser).

This sequence belongs to the PAL/histidase family. Post-translationally, contains an active site 4-methylidene-imidazol-5-one (MIO), which is formed autocatalytically by cyclization and dehydration of residues Ser-Ser-Gly.

It is found in the cytoplasm. The enzyme catalyses L-histidine = trans-urocanate + NH4(+). It functions in the pathway amino-acid degradation; L-histidine degradation into L-glutamate; N-formimidoyl-L-glutamate from L-histidine: step 1/3. This is Histidine ammonia-lyase 2 (hutH2) from Fusobacterium nucleatum subsp. nucleatum (strain ATCC 25586 / DSM 15643 / BCRC 10681 / CIP 101130 / JCM 8532 / KCTC 2640 / LMG 13131 / VPI 4355).